Reading from the N-terminus, the 185-residue chain is ATP synthase subunit b 2 (185 aa).

The disordered stretch occupies residues 1 to 25; it reads MAESHGNAHGATAHTEADGGHKAPF. Residues 34–56 traverse the membrane as a helical segment; it reads ASQLVSLTIAFVALYLISSRLAL.

Belongs to the ATPase B chain family. F-type ATPases have 2 components, F(1) - the catalytic core - and F(0) - the membrane proton channel. F(1) has five subunits: alpha(3), beta(3), gamma(1), delta(1), epsilon(1). F(0) has three main subunits: a(1), b(2) and c(10-14). The alpha and beta chains form an alternating ring which encloses part of the gamma chain. F(1) is attached to F(0) by a central stalk formed by the gamma and epsilon chains, while a peripheral stalk is formed by the delta and b chains.

The protein resides in the cell inner membrane. Its function is as follows. F(1)F(0) ATP synthase produces ATP from ADP in the presence of a proton or sodium gradient. F-type ATPases consist of two structural domains, F(1) containing the extramembraneous catalytic core and F(0) containing the membrane proton channel, linked together by a central stalk and a peripheral stalk. During catalysis, ATP synthesis in the catalytic domain of F(1) is coupled via a rotary mechanism of the central stalk subunits to proton translocation. Functionally, component of the F(0) channel, it forms part of the peripheral stalk, linking F(1) to F(0). The b'-subunit is a diverged and duplicated form of b found in plants and photosynthetic bacteria. In Nitrobacter winogradskyi (strain ATCC 25391 / DSM 10237 / CIP 104748 / NCIMB 11846 / Nb-255), this protein is ATP synthase subunit b 2 (atpF2).